The sequence spans 260 residues: MRRILCLAVVIFIINDVSSQGLGSNKNWKKSGMSLSSPGNKKPTGNNNAVPQKSKMNNVNQNSLSQPKRPSHPGNSMYFMGNQGPMGMMGGFGMGMNNKQMREFMIAKRTHGVSPFLKKKICHMAKVAPPVNGIMPSPPQLYAQGFKIRRIGKWFSHDLDWSEGVAMCHNKEMEHRGCEKTPSAKWGRMFPGMGGMGGMGGMGGMMMGSRPMASCDVTKPNSCGNPALMKCSKYHKDRFGMPVCCATSEMTANQLENMGF.

A signal peptide spans methionine 1–serine 19. Residues glycine 23–asparagine 75 are disordered. Positions methionine 33–lysine 68 are enriched in polar residues.

As to expression, expressed in mantle distal zone, mantle margin and grafted pearl pockets. Not expressed in adductor muscle, gills, hemocytes or ungrafted pearl pockets. Within the mantle, specifically expressed in mineralizing outer epithelium cells (at protein level). After secretion incorporated into acid-insoluble nacre matrix of shell and pearl (at protein level). Not found in acid-insoluble matrix of shell prisms (at protein level).

The protein resides in the secreted. In Margaritifera margaritifera (Freshwater pearl mussel), this protein is Methionine-rich nacre protein.